The chain runs to 428 residues: Forkhead box protein B2 (428 aa).

The segment at residues 12 to 103 is a DNA-binding region (fork-head); the sequence is QKPPYSYISL…GDMFENGSFL (92 aa). Disordered regions lie at residues 118-217 and 408-428; these read HLHS…MQEA and PTAAGRADSKGSSLHSVLVHS. Positions 136–163 are enriched in basic residues; that stretch reads LHPHHPHHAHHHHHHHHHAAHHHHHHHP. 2 stretches are compositionally biased toward pro residues: residues 164 to 174 and 183 to 192; these read PQPPPPPPPHM and APAPQPPHLP. Residues 193–217 are compositionally biased toward low complexity; the sequence is SQPAQQPQPQSQPPQTSHPGKMQEA.

It localises to the nucleus. Transcription factor. This Mus musculus (Mouse) protein is Forkhead box protein B2 (Foxb2).